The chain runs to 280 residues: Golgi to ER traffic protein 2 (280 aa).

3 stretches are compositionally biased toward basic and acidic residues: residues 1 to 17 (MSLS…ERRQ), 44 to 62 (SALD…EAVK), and 71 to 80 (AKKESTAQAK). The segment at 1–80 (MSLSEAEKRK…AKKESTAQAK (80 aa)) is disordered. Residues 1–146 (MSLSEAEKRK…VEYHKYRVNT (146 aa)) lie on the Cytoplasmic side of the membrane. The chain crosses the membrane as a helical span at residues 147-166 (LTAKTTLVKWIVLLAYIFLL). The Lumenal segment spans residues 167–191 (TRTDDTYFPFVVRSYLPEVFTSQSS). A helical transmembrane segment spans residues 192-211 (FFSIFLTFEILATSIYYQLS). The Cytoplasmic portion of the chain corresponds to 212-258 (VGVERETGVKTLQDTSKIVSLVSMVPEGILPIADLRGKVILAMKYWN). A helical transmembrane segment spans residues 259–279 (IIAMMIGDVCFVLVAIGLVSQ). A topological domain (lumenal) is located at residue I280.

The protein belongs to the GET2 family. As to quaternary structure, component of the Golgi to ER traffic (GET) complex, which is composed of GET1, GET2 and GET3. Within the complex, GET1 and GET2 form a heterotetramer which is stabilized by phosphatidylinositol binding and which binds to the GET3 homodimer.

The protein resides in the endoplasmic reticulum membrane. It localises to the golgi apparatus membrane. Functionally, required for the post-translational delivery of tail-anchored (TA) proteins to the endoplasmic reticulum. Together with GET1, acts as a membrane receptor for soluble GET3, which recognizes and selectively binds the transmembrane domain of TA proteins in the cytosol. The GET complex cooperates with the HDEL receptor ERD2 to mediate the ATP-dependent retrieval of resident ER proteins that contain a C-terminal H-D-E-L retention signal from the Golgi to the ER. This chain is Golgi to ER traffic protein 2, found in Candida glabrata (strain ATCC 2001 / BCRC 20586 / JCM 3761 / NBRC 0622 / NRRL Y-65 / CBS 138) (Yeast).